The sequence spans 212 residues: MAFCTKLGGHWKQGVNVPVSSMLGSLRYMSTKLYIGGLSPGTDEHSLKDAFSSFNGVTEARVMTNKVTGRSRGYGFVNFISEDSANSAISAMNGQELNGFNISVNVAKDWPSLPLSLDESIEEAEKKENKMMSRSVWKDPFVDAFLMKKKNAALNRKIWSRRSTILPEYVDSAVRIYNGKTHVRCKITEGKVGHKFGEFAFTRKVKKHAKAK.

The N-terminal 29 residues, 1 to 29 (MAFCTKLGGHWKQGVNVPVSSMLGSLRYM), are a transit peptide targeting the mitochondrion. The RRM domain occupies 31 to 109 (TKLYIGGLSP…FNISVNVAKD (79 aa)).

Belongs to the universal ribosomal protein uS19 family. In terms of assembly, component of the mitochondrial ribosome small subunit.

It is found in the mitochondrion. The RNA-binding domain found in RPS19 may functionally replace the missing mitochondrial RPS13. This Arabidopsis thaliana (Mouse-ear cress) protein is Small ribosomal subunit protein uS19m (RPS19).